The primary structure comprises 406 residues: Succinylornithine transaminase (406 aa).

Lysine 252 carries the post-translational modification N6-(pyridoxal phosphate)lysine.

It belongs to the class-III pyridoxal-phosphate-dependent aminotransferase family. AstC subfamily. Pyridoxal 5'-phosphate is required as a cofactor.

The enzyme catalyses N(2)-succinyl-L-ornithine + 2-oxoglutarate = N-succinyl-L-glutamate 5-semialdehyde + L-glutamate. It functions in the pathway amino-acid degradation; L-arginine degradation via AST pathway; L-glutamate and succinate from L-arginine: step 3/5. In terms of biological role, catalyzes the transamination of N(2)-succinylornithine and alpha-ketoglutarate into N(2)-succinylglutamate semialdehyde and glutamate. Can also act as an acetylornithine aminotransferase. This is Succinylornithine transaminase from Citrobacter koseri (strain ATCC BAA-895 / CDC 4225-83 / SGSC4696).